An 860-amino-acid polypeptide reads, in one-letter code: Leucine--tRNA ligase (860 aa).

A 'HIGH' region motif is present at residues 42 to 52; the sequence is PYPSGRLHMGH. The 'KMSKS' region signature appears at 619–623; that stretch reads KMSKS. An ATP-binding site is contributed by Lys-622.

This sequence belongs to the class-I aminoacyl-tRNA synthetase family.

Its subcellular location is the cytoplasm. It catalyses the reaction tRNA(Leu) + L-leucine + ATP = L-leucyl-tRNA(Leu) + AMP + diphosphate. The protein is Leucine--tRNA ligase of Escherichia coli (strain K12 / MC4100 / BW2952).